The chain runs to 338 residues: Glycerol-3-phosphate dehydrogenase [NAD(P)+] (338 aa).

NADPH-binding residues include Ser-13, Trp-14, and Lys-108. Sn-glycerol 3-phosphate is bound by residues Lys-108, Gly-139, and Ser-141. Ala-143 lines the NADPH pocket. Sn-glycerol 3-phosphate is bound by residues Lys-194, Asp-247, Ser-257, Arg-258, and Asn-259. Lys-194 acts as the Proton acceptor in catalysis. Arg-258 serves as a coordination point for NADPH. Residues Val-282 and Glu-284 each coordinate NADPH.

Belongs to the NAD-dependent glycerol-3-phosphate dehydrogenase family.

The protein localises to the cytoplasm. The catalysed reaction is sn-glycerol 3-phosphate + NAD(+) = dihydroxyacetone phosphate + NADH + H(+). It catalyses the reaction sn-glycerol 3-phosphate + NADP(+) = dihydroxyacetone phosphate + NADPH + H(+). Its pathway is membrane lipid metabolism; glycerophospholipid metabolism. Functionally, catalyzes the reduction of the glycolytic intermediate dihydroxyacetone phosphate (DHAP) to sn-glycerol 3-phosphate (G3P), the key precursor for phospholipid synthesis. The chain is Glycerol-3-phosphate dehydrogenase [NAD(P)+] from Streptococcus uberis (strain ATCC BAA-854 / 0140J).